The chain runs to 448 residues: Glucose-6-phosphate isomerase (448 aa).

The Proton donor role is filled by Glu290. Active-site residues include His311 and Lys425.

It belongs to the GPI family.

It is found in the cytoplasm. The catalysed reaction is alpha-D-glucose 6-phosphate = beta-D-fructose 6-phosphate. Its pathway is carbohydrate biosynthesis; gluconeogenesis. It participates in carbohydrate degradation; glycolysis; D-glyceraldehyde 3-phosphate and glycerone phosphate from D-glucose: step 2/4. Functionally, catalyzes the reversible isomerization of glucose-6-phosphate to fructose-6-phosphate. The polypeptide is Glucose-6-phosphate isomerase (Latilactobacillus sakei subsp. sakei (strain 23K) (Lactobacillus sakei subsp. sakei)).